A 276-amino-acid polypeptide reads, in one-letter code: 2,3,4,5-tetrahydropyridine-2,6-dicarboxylate N-succinyltransferase (276 aa).

Substrate-binding residues include arginine 104 and aspartate 141.

Belongs to the transferase hexapeptide repeat family. In terms of assembly, homotrimer.

The protein resides in the cytoplasm. The enzyme catalyses (S)-2,3,4,5-tetrahydrodipicolinate + succinyl-CoA + H2O = (S)-2-succinylamino-6-oxoheptanedioate + CoA. It participates in amino-acid biosynthesis; L-lysine biosynthesis via DAP pathway; LL-2,6-diaminopimelate from (S)-tetrahydrodipicolinate (succinylase route): step 1/3. This chain is 2,3,4,5-tetrahydropyridine-2,6-dicarboxylate N-succinyltransferase, found in Pseudoalteromonas translucida (strain TAC 125).